A 425-amino-acid polypeptide reads, in one-letter code: Enolase (425 aa).

Gln163 serves as a coordination point for (2R)-2-phosphoglycerate. The active-site Proton donor is the Glu205. 3 residues coordinate Mg(2+): Asp242, Glu285, and Asp312. Residues Lys337, Arg366, Ser367, and Lys388 each contribute to the (2R)-2-phosphoglycerate site. Lys337 serves as the catalytic Proton acceptor.

The protein belongs to the enolase family. Requires Mg(2+) as cofactor.

The protein resides in the cytoplasm. It is found in the secreted. Its subcellular location is the cell surface. The enzyme catalyses (2R)-2-phosphoglycerate = phosphoenolpyruvate + H2O. It functions in the pathway carbohydrate degradation; glycolysis; pyruvate from D-glyceraldehyde 3-phosphate: step 4/5. Functionally, catalyzes the reversible conversion of 2-phosphoglycerate (2-PG) into phosphoenolpyruvate (PEP). It is essential for the degradation of carbohydrates via glycolysis. The sequence is that of Enolase from Paracoccus denitrificans (strain Pd 1222).